A 58-amino-acid polypeptide reads, in one-letter code: UPF0391 membrane protein Sbal_1421 (58 aa).

Transmembrane regions (helical) follow at residues 6–26 and 28–48; these read LVFL…IAGA and AGIA…SLLV.

The protein belongs to the UPF0391 family.

The protein resides in the cell membrane. The chain is UPF0391 membrane protein Sbal_1421 from Shewanella baltica (strain OS155 / ATCC BAA-1091).